The chain runs to 526 residues: Tyrosine 2,3-aminomutase (526 aa).

Tyr-41 acts as the Proton donor/acceptor in catalysis. A substrate-binding site is contributed by His-71. Positions 130-132 (ASG) form a cross-link, 5-imidazolinone (Ala-Gly). Ser-131 carries the 2,3-didehydroalanine (Ser) modification. Substrate is bound by residues Asn-183 and Arg-288.

It belongs to the TAL/TAM family. Homotetramer; dimer of dimers. Post-translationally, contains an active site 4-methylidene-imidazol-5-one (MIO), which is formed autocatalytically by cyclization and dehydration of residues Ala-Ser-Gly.

It catalyses the reaction L-tyrosine = 3-amino-3-(4-hydroxyphenyl)propanoate. The enzyme catalyses L-tyrosine = (E)-4-coumarate + NH4(+). Its function is as follows. Has aminomutase and, to a much lesser extent, ammonia-lyase activity. Primarily, catalyzes the rearrangement of L-tyrosine to S-beta-tyrosine, which is probably incorporated into secondary metabolite myxovalargin. The aminomutase activity exclusively produces S-beta-tyrosine. The sequence is that of Tyrosine 2,3-aminomutase from Myxococcus fulvus.